An 89-amino-acid polypeptide reads, in one-letter code: NADH-ubiquinone oxidoreductase chain 4L (89 aa).

3 helical membrane-spanning segments follow: residues 1–21, 22–42, and 55–75; these read MNFS…NRKN, IILM…LILI, and FAIY…GILV.

Belongs to the complex I subunit 4L family.

The protein localises to the mitochondrion membrane. The catalysed reaction is a ubiquinone + NADH + 5 H(+)(in) = a ubiquinol + NAD(+) + 4 H(+)(out). Core subunit of the mitochondrial membrane respiratory chain NADH dehydrogenase (Complex I) that is believed to belong to the minimal assembly required for catalysis. Complex I functions in the transfer of electrons from NADH to the respiratory chain. The immediate electron acceptor for the enzyme is believed to be ubiquinone. This Talaromyces marneffei (Penicillium marneffei) protein is NADH-ubiquinone oxidoreductase chain 4L (nd4L).